The chain runs to 269 residues: MPLYFIGLGLYDEKDITLKGLEIAKRCDKVYAEFYTSLMAGTTLEKIEEVIGKKIIVLNREDVEMNFEKIVLPEAKEKEVAFLTAGDPMVATTHAELRIRAKRMGVESYVIHAPSIYSAVAITGLHIYKFGKSATVAYPEGNWFPTSYYDVVKENLERGLHTLLFLDIKAEKGKYMTANEAMELLLKVEEMRGENVFTPNTLVVVLGRAGSLNPTIRAGYVKDMIKEDFGKQPHVLIVPGKLHVVEAEYLVEIAGAPKEILEQFAPRKM.

S-adenosyl-L-methionine contacts are provided by residues Leu-10, Asp-87, Val-90, 115–116 (SI), Leu-166, Ala-209, and His-234.

Belongs to the diphthine synthase family. As to quaternary structure, homodimer.

The enzyme catalyses 2-[(3S)-amino-3-carboxypropyl]-L-histidyl-[translation elongation factor 2] + 3 S-adenosyl-L-methionine = diphthine-[translation elongation factor 2] + 3 S-adenosyl-L-homocysteine + 3 H(+). It functions in the pathway protein modification; peptidyl-diphthamide biosynthesis. Functionally, S-adenosyl-L-methionine-dependent methyltransferase that catalyzes the trimethylation of the amino group of the modified target histidine residue in translation elongation factor 2 (EF-2), to form an intermediate called diphthine. The three successive methylation reactions represent the second step of diphthamide biosynthesis. The polypeptide is Diphthine synthase (Pyrococcus furiosus (strain ATCC 43587 / DSM 3638 / JCM 8422 / Vc1)).